The chain runs to 303 residues: Bifunctional protein FolD 2 (303 aa).

Residues Gly169 to Ser171, Ser194, and Ile235 contribute to the NADP(+) site.

It belongs to the tetrahydrofolate dehydrogenase/cyclohydrolase family. As to quaternary structure, homodimer.

It catalyses the reaction (6R)-5,10-methylene-5,6,7,8-tetrahydrofolate + NADP(+) = (6R)-5,10-methenyltetrahydrofolate + NADPH. The enzyme catalyses (6R)-5,10-methenyltetrahydrofolate + H2O = (6R)-10-formyltetrahydrofolate + H(+). Its pathway is one-carbon metabolism; tetrahydrofolate interconversion. Its function is as follows. Catalyzes the oxidation of 5,10-methylenetetrahydrofolate to 5,10-methenyltetrahydrofolate and then the hydrolysis of 5,10-methenyltetrahydrofolate to 10-formyltetrahydrofolate. The protein is Bifunctional protein FolD 2 of Pseudomonas putida (strain GB-1).